A 657-amino-acid chain; its full sequence is Methionine--tRNA ligase (657 aa).

Positions 13–23 match the 'HIGH' region motif; it reads YYPSGNLHIGH. The short motif at 308–312 is the 'KMSKS' region element; the sequence is KMSKS. Lys311 serves as a coordination point for ATP. Positions 557-657 constitute a tRNA-binding domain; that stretch reads DFDKVEIKAA…SAIPNGAVIK (101 aa).

Belongs to the class-I aminoacyl-tRNA synthetase family. MetG type 2B subfamily. In terms of assembly, homodimer.

The protein resides in the cytoplasm. The enzyme catalyses tRNA(Met) + L-methionine + ATP = L-methionyl-tRNA(Met) + AMP + diphosphate. In terms of biological role, is required not only for elongation of protein synthesis but also for the initiation of all mRNA translation through initiator tRNA(fMet) aminoacylation. This chain is Methionine--tRNA ligase, found in Staphylococcus aureus (strain COL).